The primary structure comprises 271 residues: MANFTAADVKRLRELTGAGMLACKNALAETDGDFDKAVEALRIKGAKDVGKRAERATAEGLVAAKDGALIELNCETDFVAKNAEFQTLADQVVAAAAAAKPADVDALKGASIGDKTVEQAIAELSAKIGEKLELRRVAIFDGTVEAYLHRRSADLPPAVGVLVEYRGDDAAAAHAVALQIAALRARYLSRDDVPEDIVASERRIAEETARAEGKPEQALPKIVEGRLNGFFKDAVLLEQASVSDNKKTVKALLDVAGVTVTRFVRFEVGQA.

Residues 76-79 form an involved in Mg(2+) ion dislocation from EF-Tu region; that stretch reads TDFV.

It belongs to the EF-Ts family.

It localises to the cytoplasm. Functionally, associates with the EF-Tu.GDP complex and induces the exchange of GDP to GTP. It remains bound to the aminoacyl-tRNA.EF-Tu.GTP complex up to the GTP hydrolysis stage on the ribosome. This Mycobacterium tuberculosis (strain ATCC 25177 / H37Ra) protein is Elongation factor Ts.